We begin with the raw amino-acid sequence, 467 residues long: ATP-dependent protease ATPase subunit HslU (467 aa).

ATP contacts are provided by residues Val-22 and 64–69 (GVGKTE). The tract at residues 146–185 (KASNNSNPLESLLGGAIPNFGNNDDEEEETPTEEIKTKRS) is disordered. The segment covering 168-177 (NDDEEEETPT) has biased composition (acidic residues). ATP is bound by residues Asp-280, Glu-345, and Arg-417.

It belongs to the ClpX chaperone family. HslU subfamily. As to quaternary structure, a double ring-shaped homohexamer of HslV is capped on each side by a ring-shaped HslU homohexamer. The assembly of the HslU/HslV complex is dependent on binding of ATP.

It is found in the cytoplasm. Its function is as follows. ATPase subunit of a proteasome-like degradation complex; this subunit has chaperone activity. The binding of ATP and its subsequent hydrolysis by HslU are essential for unfolding of protein substrates subsequently hydrolyzed by HslV. HslU recognizes the N-terminal part of its protein substrates and unfolds these before they are guided to HslV for hydrolysis. The protein is ATP-dependent protease ATPase subunit HslU of Staphylococcus haemolyticus (strain JCSC1435).